Here is a 376-residue protein sequence, read N- to C-terminus: Putative C-mannosyltransferase DPY19L2P2 (376 aa).

N-linked (GlcNAc...) asparagine glycosylation is present at asparagine 32. A run of 6 helical transmembrane segments spans residues 52–72, 107–127, 154–174, 182–202, 233–253, and 299–319; these read ACFY…LFFI, LRES…TLIL, AQFI…VGYI, IIYM…GNSM, LNCW…LKFL, and LLIY…CFIF.

This sequence belongs to the dpy-19 family. Fibroblast, lung, lymphoblast, spleen and testis.

The protein resides in the membrane. In terms of biological role, probable C-mannosyltransferase that mediates C-mannosylation of tryptophan residues on target proteins. The polypeptide is Putative C-mannosyltransferase DPY19L2P2 (DPY19L2P2) (Homo sapiens (Human)).